We begin with the raw amino-acid sequence, 87 residues long: Type 3 secretion system needle filament protein (87 aa).

The protein belongs to the SctF family. In terms of assembly, the core secretion machinery of the T3SS is composed of approximately 20 different proteins, including cytoplasmic components, a base, an export apparatus and a needle. This subunit polymerizes and forms the helical needle filament. Forms high-order oligomers in vitro. Forms a stable ternary complex with the YscE-YscG chaperone. Interacts directly with YscG but makes very little direct contact with YscE. Interacts with the needle adapter protein YscI/SctI.

The protein resides in the secreted. Its subcellular location is the cell surface. The secretion and/or polymerization may be controlled by the type III secretion system regulator YopR. Interaction with YscE-YscG chaperone prevents premature polymerization of YscF/SctF in the bacterial cytosol and is required for its stability and efficient secretion. Interaction with the needle adapter protein YscI/SctI is required for YscF/SctF secretion, needle assembly and Yop secretion. The N-terminus varies among bacterial species, not only in amino acid composition but also in the number of amino acids, and may function in manipulating the host response to the advantage of the bacteria. In Y.pestis, the N-terminus can function to decrease cytokine induction, perhaps contributing to a favorable immune environment leading to survival of Y.pestis within the eukaryotic host. Its function is as follows. Component of the type III secretion system (T3SS), also called injectisome, which is used to inject bacterial effector proteins into eukaryotic host cells. YscF/SctF forms the external needle filament that protrudes from the bacterial surface. Essential for the calcium-dependent regulation of T3SS and Yop secretion. Required to block Yop secretion in the presence of extracellular calcium. May be the extracellular T3SS component that senses extracellular calcium and/or participates in transmitting the calcium signal to the cytoplasmic compartment where the block in secretion is initiated. In terms of biological role, during infection, can induce innate immune responses. The needle proteins interact with host TLR2 or TLR4, and induce signaling by NF-kappa-B and/or AP-1. This activation is MyD88 dependent and results in increased expression of cytokines, including TNF-alpha, IL-6 and IL-8. Innate immune responses are modulated by the N-terminal region of YscF/SctF. This is Type 3 secretion system needle filament protein from Yersinia pestis.